The following is a 135-amino-acid chain: MRLQFFLVMAVATLATISATRVPDDANLQSVNAPVQTVTRSRRFLRTADTDIVYEPKVHNPGKKQVFIEDKLQKALTDPKKNKKLYARWYNSGFTVKQVEGGLDQNENRELELTYKNLALGYAKYYQARRSQEAK.

An N-terminal signal peptide occupies residues 1 to 19; it reads MRLQFFLVMAVATLATISA. The short motif at 43 to 71 is the RxLR-dEER element; it reads RFLRTADTDIVYEPKVHNPGKKQVFIEDK. The a 1,2-diacyl-sn-glycero-3-phospho-(1D-myo-inositol-3-phosphate) site is built by lysine 81, lysine 83, and lysine 84.

The protein belongs to the RxLR effector family.

The protein resides in the secreted. The protein localises to the host cell. In terms of biological role, effector that suppresses plant defense responses during the early stages of pathogen infection. Suppresses cell death induced by effectors and PAMPs in plant hosts. The protein is RxLR effector protein Avh5 of Phytophthora sojae (Soybean stem and root rot agent).